Reading from the N-terminus, the 126-residue chain is Prostate and testis expressed protein 1 (126 aa).

Residues 1–21 form the signal peptide; that stretch reads MDKSLLLELPILLCCFRALSG. Residues 46 to 125 form the UPAR/Ly6 domain; that stretch reads VQCRMCHLQF…CRSHDLCNED (80 aa). Cystine bridges form between cysteine 48–cysteine 75, cysteine 51–cysteine 60, cysteine 67–cysteine 94, and cysteine 98–cysteine 115.

This sequence belongs to the PATE family. In terms of tissue distribution, expressed specifically in prostate cancer, normal prostate, and testis. Expressed in the epithelial cells of the prostate cancer and normal prostate tissues.

It localises to the secreted. The polypeptide is Prostate and testis expressed protein 1 (PATE1) (Homo sapiens (Human)).